Here is a 239-residue protein sequence, read N- to C-terminus: MKRPSGRAPHQLRPIRITRNYTRHAEGSVLVEFGDTRVICTVSAEAGVPRFLKGQGKGWLTAEYGMLPRATGERMAREASRGRQGGRTLEIQRLIGRSLRAALDMSKLGENTLYVDCDVIQADGGTRTASITGAMVALVDALAVLKKRGALKGDPLKQMVAAVSVGIYQGEPILDLDYPEDSDAETDLNVVMTDAGGFIEVQGTAEGEPFQPEELNAMLALATQGIRELFELQRAVLAD.

Residues R87 and 125 to 127 (GTR) contribute to the phosphate site.

Belongs to the RNase PH family. Homohexameric ring arranged as a trimer of dimers.

It catalyses the reaction tRNA(n+1) + phosphate = tRNA(n) + a ribonucleoside 5'-diphosphate. Functionally, phosphorolytic 3'-5' exoribonuclease that plays an important role in tRNA 3'-end maturation. Removes nucleotide residues following the 3'-CCA terminus of tRNAs; can also add nucleotides to the ends of RNA molecules by using nucleoside diphosphates as substrates, but this may not be physiologically important. Probably plays a role in initiation of 16S rRNA degradation (leading to ribosome degradation) during starvation. In Azotobacter vinelandii (strain DJ / ATCC BAA-1303), this protein is Ribonuclease PH.